Here is a 68-residue protein sequence, read N- to C-terminus: Sperm-associated antigen 11A (68 aa).

A signal peptide spans 1–19 (MKVLLLFAVFFCLVQRNSG). 3 disulfides stabilise this stretch: C30-C59, C37-C52, and C42-C60.

This sequence belongs to the beta-defensin family. In terms of tissue distribution, only expressed in epididymis (middle part of the caput).

Its subcellular location is the secreted. Functionally, has antimicrobial activity against E.coli. Plays a role in the defense response in the male reproductive tract, contributing to sperm maturation, storage and protection. This chain is Sperm-associated antigen 11A, found in Rattus norvegicus (Rat).